We begin with the raw amino-acid sequence, 422 residues long: Beta-1,3-galactosyltransferase 2 (422 aa).

The Cytoplasmic portion of the chain corresponds to 1 to 24 (MLQWRRRHCCFAKMTWNAKRSLFR). A helical; Signal-anchor for type II membrane protein membrane pass occupies residues 25–45 (THLIGVLSLVFLFAMFLFFNH). The Lumenal segment spans residues 46-422 (HDWLPGRAGF…AGRYRHRKLH (377 aa)). N-linked (GlcNAc...) asparagine glycans are attached at residues Asn75, Asn100, Asn119, Asn176, and Asn226. The interval 90 to 110 (TLRPQTATNSNNTDLSPQGVT) is disordered.

It belongs to the glycosyltransferase 31 family. Mn(2+) serves as cofactor.

Its subcellular location is the golgi apparatus membrane. It catalyses the reaction an N-acetyl-beta-D-glucosaminyl derivative + UDP-alpha-D-galactose = a beta-D-galactosyl-(1-&gt;3)-N-acetyl-beta-D-glucosaminyl derivative + UDP + H(+). The catalysed reaction is a beta-D-GlcNAc-(1-&gt;3)-beta-D-Gal-(1-&gt;4)-beta-D-Glc-(1&lt;-&gt;1)-Cer(d18:1(4E)) + UDP-alpha-D-galactose = a beta-D-Gal-(1-&gt;3)-beta-D-GlcNAc-(1-&gt;3)-beta-D-Gal-(1-&gt;4)-beta-D-Glc-(1&lt;-&gt;1')-Cer(d18:1(4E)) + UDP + H(+). It carries out the reaction a neolactoside IV(3)-beta-GlcNAc-nLc4Cer(d18:1(4E)) + UDP-alpha-D-galactose = a neolactoside IV(3)-beta-[Gal-beta-(1-&gt;3)-GlcNAc]-nLc4Cer(d18:1(4E)) + UDP + H(+). Its pathway is protein modification; protein glycosylation. Its function is as follows. Beta-1,3-galactosyltransferase that transfers galactose from UDP-galactose to substrates with a terminal beta-N-acetylglucosamine (beta-GlcNAc) residue. Can also utilize substrates with a terminal galactose residue, albeit with lower efficiency. Involved in the biosynthesis of the carbohydrate moieties of glycolipids and glycoproteins. Inactive towards substrates with terminal alpha-N-acetylglucosamine (alpha-GlcNAc) or alpha-N-acetylgalactosamine (alpha-GalNAc) residues. This is Beta-1,3-galactosyltransferase 2 (B3GALT2) from Pongo abelii (Sumatran orangutan).